The following is a 182-amino-acid chain: ATP synthase subunit delta (182 aa).

The protein belongs to the ATPase delta chain family. In terms of assembly, F-type ATPases have 2 components, F(1) - the catalytic core - and F(0) - the membrane proton channel. F(1) has five subunits: alpha(3), beta(3), gamma(1), delta(1), epsilon(1). CF(0) has four main subunits: a(1), b(1), b'(1) and c(10-14). The alpha and beta chains form an alternating ring which encloses part of the gamma chain. F(1) is attached to F(0) by a central stalk formed by the gamma and epsilon chains, while a peripheral stalk is formed by the delta, b and b' chains.

The protein localises to the cellular thylakoid membrane. In terms of biological role, f(1)F(0) ATP synthase produces ATP from ADP in the presence of a proton or sodium gradient. F-type ATPases consist of two structural domains, F(1) containing the extramembraneous catalytic core and F(0) containing the membrane proton channel, linked together by a central stalk and a peripheral stalk. During catalysis, ATP synthesis in the catalytic domain of F(1) is coupled via a rotary mechanism of the central stalk subunits to proton translocation. This protein is part of the stalk that links CF(0) to CF(1). It either transmits conformational changes from CF(0) to CF(1) or is implicated in proton conduction. This chain is ATP synthase subunit delta, found in Prochlorococcus marinus (strain MIT 9303).